The following is a 523-amino-acid chain: GMP synthase [glutamine-hydrolyzing] (523 aa).

The Glutamine amidotransferase type-1 domain maps to 9–198 (PVLVVDYGAQ…LTEIAGLEQN (190 aa)). C86 (nucleophile) is an active-site residue. Residues H172 and E174 contribute to the active site. The region spanning 199–397 (WTAANIAEEL…LGLPEVIVAR (199 aa)) is the GMPS ATP-PPase domain. 227–233 (SGGVDSA) is a binding site for ATP.

In terms of assembly, homodimer.

It carries out the reaction XMP + L-glutamine + ATP + H2O = GMP + L-glutamate + AMP + diphosphate + 2 H(+). It participates in purine metabolism; GMP biosynthesis; GMP from XMP (L-Gln route): step 1/1. Its function is as follows. Catalyzes the synthesis of GMP from XMP. This is GMP synthase [glutamine-hydrolyzing] from Corynebacterium efficiens (strain DSM 44549 / YS-314 / AJ 12310 / JCM 11189 / NBRC 100395).